The sequence spans 168 residues: DOMON domain-containing protein CBG21753 (168 aa).

The first 17 residues, 1–17 (MIKSMILVALILAFASA), serve as a signal peptide directing secretion. Residues 25–143 (SGFQSYWRFA…CQKWRWIKSG (119 aa)) enclose the DOMON domain. Residues Asn-35 and Asn-94 are each glycosylated (N-linked (GlcNAc...) asparagine). A disordered region spans residues 148-168 (GQLTRNSKSPKDKKVCPMECN). The span at 156-168 (SPKDKKVCPMECN) shows a compositional bias: basic and acidic residues.

The protein localises to the secreted. The polypeptide is DOMON domain-containing protein CBG21753 (Caenorhabditis briggsae).